The following is a 704-amino-acid chain: Phytyl ester synthase 1, chloroplastic (704 aa).

Residues 1-27 (MATCSSSLLVLPNLRLSSNQRRNFKVR) constitute a chloroplast transit peptide.

The protein belongs to the diacylglycerol acyltransferase family. As to quaternary structure, interacts with PGM48. In terms of tissue distribution, mostly expressed in flowers (e.g. sepals, petals and stamen).

The protein localises to the plastid. Its subcellular location is the chloroplast. The protein resides in the plastoglobule. The enzyme catalyses a 1,2-diacyl-3-O-(beta-D-galactosyl)-sn-glycerol + a 1,2-diacylglycerol = an acyl-3-O-(beta-D-galactosyl)-sn-glycerol + a triacylglycerol. It catalyses the reaction a 1,2-diacylglycerol + a fatty acyl-CoA = a triacylglycerol + CoA. The catalysed reaction is a fatty acyl-[ACP] + a 1,2-diacylglycerol = a triacylglycerol + holo-[ACP]. It carries out the reaction phytol + a fatty acyl-CoA = a fatty acid phytyl ester + CoA. The enzyme catalyses phytol + tetradecanoyl-CoA = tetradecanoate phytyl ester + CoA. It catalyses the reaction a 1,3-diacylglycerol + a fatty acyl-CoA = a triacylglycerol + CoA. The catalysed reaction is 1,2-dihexanoylglycerol + tetradecanoyl-CoA = 1,2-dihexanoyl-3-tetradecanoylglycerol + CoA. It carries out the reaction 1,2-dihexanoylglycerol + hexadecanoyl-CoA = 1,2-dihexanoyl-3-hexadecanoylglycerol + CoA. The enzyme catalyses 1,2-dihexanoylglycerol + octadecanoyl-CoA = 1,2-dihexanoyl-3-octadecanoylglycerol + CoA. It catalyses the reaction (7Z,10Z,13Z)-hexadecatrienoyl-CoA + 1,2-dihexanoylglycerol = 1,2-dihexanoyl-3-(7Z,10Z,13Z-hexadecatrienoyl)-glycerol + CoA. The catalysed reaction is 1,2-dihexanoylglycerol + (9Z)-octadecenoyl-CoA = 1,2-dihexanoyl-3-(9Z-octadecenoyl)-glycerol + CoA. It carries out the reaction 1,2-dihexanoylglycerol + (9Z,12Z,15Z)-octadecatrienoyl-CoA = 1,2-dihexanoyl-3-(9Z,12Z,15Z-octadecatrienoyl)-glycerol + CoA. The enzyme catalyses phytol + decanoyl-CoA = decanoate phytyl ester + CoA. It catalyses the reaction (7Z,10Z,13Z)-hexadecatrienoyl-CoA + phytol = (7Z,10Z,13Z)-hexadecatrienoate phytyl ester + CoA. The catalysed reaction is phytol + dodecanoyl-CoA = dodecanoate phytyl ester + CoA. Acyltransferase involved in fatty acid phytyl ester synthesis in chloroplasts, a process required for the maintenance of the photosynthetic membrane integrity during abiotic stress and senescence. Exhibits phytyl ester synthesis and diacylglycerol acyltransferase activities with broad substrate specificities, and can employ acyl-CoAs, acyl carrier proteins, and galactolipids as acyl donors. The chain is Phytyl ester synthase 1, chloroplastic from Arabidopsis thaliana (Mouse-ear cress).